Reading from the N-terminus, the 110-residue chain is Insulin (110 aa).

A signal peptide spans 1–24 (MALWMHLLTVLALLALWGPNTGQA). 3 disulfides stabilise this stretch: Cys-31–Cys-96, Cys-43–Cys-109, and Cys-95–Cys-100. Residues 57–87 (ELEDPQVEQTELGMGLGAGGLQPLALEMALQ) constitute a propeptide, c peptide.

Belongs to the insulin family. As to quaternary structure, heterodimer of a B chain and an A chain linked by two disulfide bonds.

Its subcellular location is the secreted. Insulin decreases blood glucose concentration. It increases cell permeability to monosaccharides, amino acids and fatty acids. It accelerates glycolysis, the pentose phosphate cycle, and glycogen synthesis in liver. The polypeptide is Insulin (INS) (Cavia porcellus (Guinea pig)).